Consider the following 735-residue polypeptide: Protein-associating with the carboxyl-terminal domain of ezrin (735 aa).

G2 carries the N-myristoyl glycine lipid modification. Residues 2 to 245 form the Protein kinase domain; it reads GSENSALKSY…LSTLLSHDFF (244 aa). HEAT repeat units lie at residues 194-249, 285-323, 333-370, and 372-409; these read FGAL…RNDF, LIASRLVPLLLNQLVFAEPVAVKSFLPYLLGPKKENAPG, LFQSRVIPVLLRLFEVHEEHVRMVLLSHIEAYVEHFTQ, and QLKKVILPQVLLGLRDTSNSIVAITLRSLAVLVSLLGP. At S439 the chain carries Phosphoserine. Disordered regions lie at residues 505–545 and 604–648; these read LSDV…ASIH and VPLT…GLGL. Residues 528-538 are compositionally biased toward acidic residues; the sequence is WPDWSEPEEPE. Residues 547–735 are interaction with EZR; the sequence is WPREPCDVAE…EELAWEDNNW (189 aa). A Phosphoserine modification is found at S701.

It belongs to the protein kinase superfamily. Interacts with EZR/VIL2 C-terminal domain. May be myristoylated; myristoylation may target it to Golgi compartment.

It is found in the cytoplasm. It localises to the golgi apparatus. Its subcellular location is the cell projection. The protein localises to the lamellipodium. Functionally, may play a role in regulating cell adhesion/migration complexes in migrating cells. The polypeptide is Protein-associating with the carboxyl-terminal domain of ezrin (Scyl3) (Mus musculus (Mouse)).